Consider the following 232-residue polypeptide: MEDHYGYMSIKNMPMSERPREKLLSFGSQSLSNAELLAIILSTGTKDRTAIDLARSILNTSTEGLRGLKDCTIEELSQVKGVGLAKASQIIAAVELGKRISLTTKVNNYKIKGPDDVSNLLMEEMRYLNKEIFNILLLTTKHDIIAIENISVGSLNASIVHPREVFNRAIKRSSSAIILAHNHPSGDPNPSGEDINITKRLIEAGNIIGISVLDHIIIGDGVYFSMKEHKLI.

An MPN domain is found at 110–232; that stretch reads KIKGPDDVSN…YFSMKEHKLI (123 aa). Residues histidine 181, histidine 183, and aspartate 194 each coordinate Zn(2+). Residues 181–194 carry the JAMM motif motif; that stretch reads HNHPSGDPNPSGED.

Belongs to the UPF0758 family.

The chain is UPF0758 protein Clos_1766 from Alkaliphilus oremlandii (strain OhILAs) (Clostridium oremlandii (strain OhILAs)).